The primary structure comprises 447 residues: MGPRRLPWARPGPALGLLLLALAGAVPAAGGSCSLLEEGNTIQKLHEDCFCYVQNRTMHLQYIWSTVQVKINSTRTFRFVPTPEKSNCRNSETVFEFAACAVQILWRPETSTETFLKIKQYGEDFCFRIQPFKEELYTVSMTREMLDGKLLFLFAAGIFLFHFANSLSRSTNFFYLSGIILGVLALLVFVLLALKRFIPRRSTFWILLSGCWMSSLYLIYCFKENMQWLWSEHRIYVLGYFVAVGTLSFATCYQHGPLTSELSITLFTWTLQLTAFVFIYCGVNIPQVAYAIIAVKPSPKGLGYPPAAAWHIGRKMKNHFQSKKVVVRCLTEEEYREQGETETVRALEELRSFCKNPDFSSWLAVSKLQSPHRFAGFVLGSPHVSPAETKAHDEEYGIGSSFLEEQLFETRTESEQDETTSYIHEGDDENEDEIHEPISFPYATELL.

The first 28 residues, 1–28 (MGPRRLPWARPGPALGLLLLALAGAVPA), serve as a signal peptide directing secretion. The next 5 helical transmembrane spans lie at 144–164 (EMLDGKLLFLFAAGIFLFHFA), 173–193 (FFYLSGIILGVLALLVFVLLA), 202–222 (STFWILLSGCWMSSLYLIYCF), 235–255 (IYVLGYFVAVGTLSFATCYQH), and 275–295 (AFVFIYCGVNIPQVAYAIIAV). Residues 410 to 438 (TRTESEQDETTSYIHEGDDENEDEIHEPI) are disordered.

The protein belongs to the NEMP family.

Its subcellular location is the nucleus inner membrane. This Gallus gallus (Chicken) protein is Nuclear envelope integral membrane protein 2 (NEMP2).